The primary structure comprises 60 residues: Conotoxin VnMRCL-012 (60 aa).

The N-terminal stretch at 1–22 (MRCLPVFVILLLLIASAPGVDA) is a signal peptide. A propeptide spanning residues 23 to 50 (QPKTKYDVPLASRHDFAKKTPKRLSKPR) is cleaved from the precursor.

It belongs to the conotoxin T superfamily. Contains 2 disulfide bonds that can be either 'C1-C3, C2-C4' or 'C1-C4, C2-C3', since these disulfide connectivities have been observed for conotoxins with cysteine framework V (for examples, see AC P0DQQ7 and AC P81755). Expressed by the venom duct.

It localises to the secreted. This is Conotoxin VnMRCL-012 from Conus ventricosus (Mediterranean cone).